A 131-amino-acid chain; its full sequence is MSTISYTAVGRRKEATAKVKLQPGTGIITVNKKPGETYFNYNSEYLSTLRGPLLALGLENDYDLHITAKGGGIKGQTDAVKLGLARAICTMSSEKRESLKPHGYLTRDYRAKERKKYGLRKARKAPQFSKR.

It belongs to the universal ribosomal protein uS9 family.

The protein resides in the plastid. It localises to the chloroplast. The protein is Small ribosomal subunit protein uS9c (rps9) of Emiliania huxleyi (Coccolithophore).